Consider the following 70-residue polypeptide: Large ribosomal subunit protein bL31 (70 aa).

Zn(2+) contacts are provided by Cys16, Cys18, Cys37, and Cys40.

It belongs to the bacterial ribosomal protein bL31 family. Type A subfamily. In terms of assembly, part of the 50S ribosomal subunit. Requires Zn(2+) as cofactor.

Functionally, binds the 23S rRNA. The protein is Large ribosomal subunit protein bL31 of Haemophilus ducreyi (strain 35000HP / ATCC 700724).